Here is a 366-residue protein sequence, read N- to C-terminus: MSGSNDLRIAVLGVGMMGADHVARITERIKGATVAVVNDYFIEKAEQIAAGIPGCRVIGDPLDAIADPDVDAVVLATPGPTHEKQLLACLEHGKPVMCEKPLTTDVATSLEIVKREAELGKKLIQVGFMRRFDHEYEQLKTLIDDGTFGQVLLAHCVHRNPAVPPSFDSSMIVKDSLVHEVDVTRFLFDEEITSVHILRPAANPGAPEGLQDPQIALFSTESGRHVDVEVFVTTGVAYEVRTEIVAEKGSAFIGLDVGLVRKFGTGAGNGRSGAGMSGGEITPSFKERFGQAYDVEIQRWVNAARTGAETGNYIDGPGAWDGYAAAAVCAAGVQSLETGERVAVDMVDRSSIPGAEPAERPIGPGA.

The protein belongs to the Gfo/Idh/MocA family. As to quaternary structure, homotetramer.

The enzyme catalyses myo-inositol + NAD(+) = scyllo-inosose + NADH + H(+). Functionally, involved in the oxidation of myo-inositol (MI) to 2-keto-myo-inositol (2KMI or 2-inosose). In Rhodococcus jostii (strain RHA1), this protein is Inositol 2-dehydrogenase.